The sequence spans 420 residues: UDP-N-acetyl-D-mannosamine dehydrogenase (420 aa).

Positions 13, 14, 33, 85, and 126 each coordinate NAD(+). UDP-N-acetyl-alpha-D-mannosaminouronate-binding residues include Arg-160, Val-161, Lys-212, Asn-216, Arg-219, His-250, Arg-252, and Gly-263. The active-site Proton donor/acceptor is Lys-212. Cys-266 (nucleophile) is an active-site residue. Phe-330 and Lys-331 together coordinate UDP-N-acetyl-alpha-D-mannosaminouronate. Residue Arg-338 coordinates NAD(+). Lys-416 is a binding site for UDP-N-acetyl-alpha-D-mannosaminouronate.

It belongs to the UDP-glucose/GDP-mannose dehydrogenase family. WecC subfamily. In terms of assembly, homodimer.

It carries out the reaction UDP-N-acetyl-alpha-D-mannosamine + 2 NAD(+) + H2O = UDP-N-acetyl-alpha-D-mannosaminouronate + 2 NADH + 3 H(+). The protein operates within bacterial outer membrane biogenesis; enterobacterial common antigen biosynthesis. Its function is as follows. Catalyzes the four-electron oxidation of UDP-N-acetyl-D-mannosamine (UDP-ManNAc), reducing NAD(+) and releasing UDP-N-acetylmannosaminuronic acid (UDP-ManNAcA). In Salmonella typhimurium (strain LT2 / SGSC1412 / ATCC 700720), this protein is UDP-N-acetyl-D-mannosamine dehydrogenase.